We begin with the raw amino-acid sequence, 166 residues long: uncharacterized protein (166 aa).

This is an uncharacterized protein from Schizosaccharomyces pombe (strain 972 / ATCC 24843) (Fission yeast).